The following is a 514-amino-acid chain: 2,3-bisphosphoglycerate-independent phosphoglycerate mutase (514 aa).

The Mn(2+) site is built by D14 and S64. The active-site Phosphoserine intermediate is the S64. Substrate-binding positions include H125, 155-156, R187, R193, 263-266, and K336; these read RD and RADR. Residues D403, H407, D444, H445, and H463 each coordinate Mn(2+).

The protein belongs to the BPG-independent phosphoglycerate mutase family. In terms of assembly, monomer. It depends on Mn(2+) as a cofactor.

It catalyses the reaction (2R)-2-phosphoglycerate = (2R)-3-phosphoglycerate. Its pathway is carbohydrate degradation; glycolysis; pyruvate from D-glyceraldehyde 3-phosphate: step 3/5. Functionally, catalyzes the interconversion of 2-phosphoglycerate and 3-phosphoglycerate. The sequence is that of 2,3-bisphosphoglycerate-independent phosphoglycerate mutase from Shewanella baltica (strain OS185).